We begin with the raw amino-acid sequence, 291 residues long: BTB/POZ domain-containing protein 19 (291 aa).

In terms of domain architecture, BTB spans 29-98 (SDVRFVVGQE…LYTNSAKLQR (70 aa)). The BACK domain maps to 134-234 (CEALQVAVTF…LALLAPAELS (101 aa)).

In Bos taurus (Bovine), this protein is BTB/POZ domain-containing protein 19 (BTBD19).